A 554-amino-acid chain; its full sequence is uncharacterized protein (554 aa).

The protein to M.jannaschii MJ0047, MJ0162 and MJ1236.

This is an uncharacterized protein from Synechocystis sp. (strain ATCC 27184 / PCC 6803 / Kazusa).